A 406-amino-acid polypeptide reads, in one-letter code: 4-hydroxy-3-methylbut-2-enyl diphosphate reductase (406 aa).

A [4Fe-4S] cluster-binding site is contributed by C66. Position 96 (H96) interacts with (2E)-4-hydroxy-3-methylbut-2-enyl diphosphate. H96 contacts dimethylallyl diphosphate. H96 is an isopentenyl diphosphate binding site. C157 contacts [4Fe-4S] cluster. H185 provides a ligand contact to (2E)-4-hydroxy-3-methylbut-2-enyl diphosphate. H185 lines the dimethylallyl diphosphate pocket. Residue H185 coordinates isopentenyl diphosphate. E187 acts as the Proton donor in catalysis. T250 provides a ligand contact to (2E)-4-hydroxy-3-methylbut-2-enyl diphosphate. Residue C288 coordinates [4Fe-4S] cluster. (2E)-4-hydroxy-3-methylbut-2-enyl diphosphate-binding residues include S317, S318, N319, and S379. 4 residues coordinate dimethylallyl diphosphate: S317, S318, N319, and S379. S317, S318, N319, and S379 together coordinate isopentenyl diphosphate.

The protein belongs to the IspH family. The cofactor is [4Fe-4S] cluster.

The enzyme catalyses isopentenyl diphosphate + 2 oxidized [2Fe-2S]-[ferredoxin] + H2O = (2E)-4-hydroxy-3-methylbut-2-enyl diphosphate + 2 reduced [2Fe-2S]-[ferredoxin] + 2 H(+). The catalysed reaction is dimethylallyl diphosphate + 2 oxidized [2Fe-2S]-[ferredoxin] + H2O = (2E)-4-hydroxy-3-methylbut-2-enyl diphosphate + 2 reduced [2Fe-2S]-[ferredoxin] + 2 H(+). It functions in the pathway isoprenoid biosynthesis; dimethylallyl diphosphate biosynthesis; dimethylallyl diphosphate from (2E)-4-hydroxy-3-methylbutenyl diphosphate: step 1/1. The protein operates within isoprenoid biosynthesis; isopentenyl diphosphate biosynthesis via DXP pathway; isopentenyl diphosphate from 1-deoxy-D-xylulose 5-phosphate: step 6/6. In terms of biological role, catalyzes the conversion of 1-hydroxy-2-methyl-2-(E)-butenyl 4-diphosphate (HMBPP) into a mixture of isopentenyl diphosphate (IPP) and dimethylallyl diphosphate (DMAPP). Acts in the terminal step of the DOXP/MEP pathway for isoprenoid precursor biosynthesis. The sequence is that of 4-hydroxy-3-methylbut-2-enyl diphosphate reductase from Synechococcus sp. (strain RCC307).